A 76-amino-acid chain; its full sequence is uORF2 protein (76 aa).

Functionally, plays a role in viral replication. The protein is uORF2 protein of Zika virus (isolate ZIKV/Human/French Polynesia/10087PF/2013) (ZIKV).